The following is a 276-amino-acid chain: Large ribosomal subunit protein uL2 (276 aa).

The tract at residues 221–276 is disordered; it reads RGSAMNPNDHPHGGGEGRAPIGRKSPMTPWGKKARGIKTRDRKKSSNELIIRRRTK. Basic residues predominate over residues 252–263; sequence KKARGIKTRDRK.

The protein belongs to the universal ribosomal protein uL2 family. In terms of assembly, part of the 50S ribosomal subunit. Forms a bridge to the 30S subunit in the 70S ribosome.

One of the primary rRNA binding proteins. Required for association of the 30S and 50S subunits to form the 70S ribosome, for tRNA binding and peptide bond formation. It has been suggested to have peptidyltransferase activity; this is somewhat controversial. Makes several contacts with the 16S rRNA in the 70S ribosome. This Phytoplasma australiense protein is Large ribosomal subunit protein uL2.